The following is a 115-amino-acid chain: Large ribosomal subunit protein bL20 (115 aa).

Belongs to the bacterial ribosomal protein bL20 family.

Binds directly to 23S ribosomal RNA and is necessary for the in vitro assembly process of the 50S ribosomal subunit. It is not involved in the protein synthesizing functions of that subunit. The protein is Large ribosomal subunit protein bL20 of Synechococcus sp. (strain CC9902).